Reading from the N-terminus, the 518-residue chain is Chromosomal replication initiator protein DnaA (518 aa).

The interval 1 to 72 is domain I, interacts with DnaA modulators; the sequence is MTLAEFWPLC…VREELAAGRS (72 aa). The tract at residues 72–180 is domain II; that stretch reads SAFVFKPGEG…DAEEARYEQT (109 aa). A disordered region spans residues 145 to 172; that stretch reads EPRQAAGSASRPESVAVAKARTDVQRDA. A domain III, AAA+ region region spans residues 181–397; it reads NLSPDYTFDT…GAFNRVGASS (217 aa). 4 residues coordinate ATP: glycine 225, glycine 227, lysine 228, and threonine 229. The tract at residues 398 to 518 is domain IV, binds dsDNA; it reads RFMNRPVIDI…YEKLLILIQN (121 aa).

This sequence belongs to the DnaA family. As to quaternary structure, oligomerizes as a right-handed, spiral filament on DNA at oriC.

The protein resides in the cytoplasm. Functionally, plays an essential role in the initiation and regulation of chromosomal replication. ATP-DnaA binds to the origin of replication (oriC) to initiate formation of the DNA replication initiation complex once per cell cycle. Binds the DnaA box (a 9 base pair repeat at the origin) and separates the double-stranded (ds)DNA. Forms a right-handed helical filament on oriC DNA; dsDNA binds to the exterior of the filament while single-stranded (ss)DNA is stabiized in the filament's interior. The ATP-DnaA-oriC complex binds and stabilizes one strand of the AT-rich DNA unwinding element (DUE), permitting loading of DNA polymerase. After initiation quickly degrades to an ADP-DnaA complex that is not apt for DNA replication. Binds acidic phospholipids. The sequence is that of Chromosomal replication initiator protein DnaA from Neisseria meningitidis serogroup B (strain ATCC BAA-335 / MC58).